A 566-amino-acid polypeptide reads, in one-letter code: Tetratricopeptide repeat protein 34 (566 aa).

Residues 1–29 are disordered; the sequence is MLQRSPRAGPSRAQGRREAAETGGPTTQE. TPR repeat units follow at residues 50–83, 178–211, 212–245, 306–339, 341–373, 424–457, 464–497, and 512–545; these read EASR…RPQA, SESL…EPGN, VQAL…GPGT, PHWH…APTS, AARA…DAPD, ACHL…ALGD, AEDF…APSL, and ARMF…DPDH.

The protein is Tetratricopeptide repeat protein 34 (TTC34) of Homo sapiens (Human).